Reading from the N-terminus, the 85-residue chain is Large ribosomal subunit protein bL27 (85 aa).

The segment at 1-22 (MAHKKAGGSTRNGRDSESKRLG) is disordered.

It belongs to the bacterial ribosomal protein bL27 family.

The chain is Large ribosomal subunit protein bL27 from Aliivibrio fischeri (strain ATCC 700601 / ES114) (Vibrio fischeri).